The primary structure comprises 188 residues: dCTP deaminase (188 aa).

DCTP is bound by residues 111-116 (KSTYAR), 135-137 (TLE), glutamine 156, tyrosine 170, and glutamine 180. Residue glutamate 137 is the Proton donor/acceptor of the active site.

It belongs to the dCTP deaminase family. Homotrimer.

The catalysed reaction is dCTP + H2O + H(+) = dUTP + NH4(+). The protein operates within pyrimidine metabolism; dUMP biosynthesis; dUMP from dCTP (dUTP route): step 1/2. Catalyzes the deamination of dCTP to dUTP. In Azotobacter vinelandii (strain DJ / ATCC BAA-1303), this protein is dCTP deaminase.